The following is a 447-amino-acid chain: Pyruvate kinase (447 aa).

Arginine 33 lines the substrate pocket. K(+)-binding residues include asparagine 35, serine 37, and aspartate 61. ATP is bound at residue 35–38 (NMSH). ATP is bound at residue arginine 68. A Mg(2+)-binding site is contributed by glutamate 203. Residues glycine 226, aspartate 227, and threonine 259 each contribute to the substrate site. Aspartate 227 lines the Mg(2+) pocket.

Belongs to the pyruvate kinase family. In terms of assembly, homotetramer. The cofactor is Mg(2+). It depends on K(+) as a cofactor.

It catalyses the reaction pyruvate + ATP = phosphoenolpyruvate + ADP + H(+). Its pathway is carbohydrate degradation; glycolysis; pyruvate from D-glyceraldehyde 3-phosphate: step 5/5. In Methanocaldococcus jannaschii (strain ATCC 43067 / DSM 2661 / JAL-1 / JCM 10045 / NBRC 100440) (Methanococcus jannaschii), this protein is Pyruvate kinase.